Reading from the N-terminus, the 291-residue chain is Nucleoid occlusion protein (291 aa).

A DNA-binding region (H-T-H motif) is located at residues Glu155 to Leu174.

The protein belongs to the ParB family.

Its subcellular location is the cytoplasm. It is found in the nucleoid. Effects nucleoid occlusion by binding relatively nonspecifically to DNA and preventing the assembly of the division machinery in the vicinity of the nucleoid, especially under conditions that disturb the cell cycle. It helps to coordinate cell division and chromosome segregation by preventing the formation of the Z ring through the nucleoid, which would cause chromosome breakage. This is Nucleoid occlusion protein from Bacillus pumilus (strain SAFR-032).